Here is a 261-residue protein sequence, read N- to C-terminus: Hemin import ATP-binding protein HmuV (261 aa).

The region spanning 8–243 (IRVTDLSYSV…ESIRTAYGHE (236 aa)) is the ABC transporter domain. 40 to 47 (GRNGAGKS) lines the ATP pocket.

It belongs to the ABC transporter superfamily. Heme (hemin) importer (TC 3.A.1.14.5) family. In terms of assembly, the complex is composed of two ATP-binding proteins (HmuV), two transmembrane proteins (HmuU) and a solute-binding protein (HmuT).

Its subcellular location is the cell membrane. Its function is as follows. Part of the ABC transporter complex HmuTUV involved in hemin import. Responsible for energy coupling to the transport system. This Deinococcus radiodurans (strain ATCC 13939 / DSM 20539 / JCM 16871 / CCUG 27074 / LMG 4051 / NBRC 15346 / NCIMB 9279 / VKM B-1422 / R1) protein is Hemin import ATP-binding protein HmuV.